Consider the following 181-residue polypeptide: UPF0215 protein AF_1433 (181 aa).

It belongs to the UPF0215 family.

The protein is UPF0215 protein AF_1433 of Archaeoglobus fulgidus (strain ATCC 49558 / DSM 4304 / JCM 9628 / NBRC 100126 / VC-16).